The sequence spans 247 residues: 2,3-bisphosphoglycerate-dependent phosphoglycerate mutase (247 aa).

Residues 9 to 16 (RHGESEWN), 22 to 23 (TG), arginine 61, 88 to 91 (ERHY), lysine 99, 115 to 116 (RR), and 183 to 184 (GN) contribute to the substrate site. Histidine 10 acts as the Tele-phosphohistidine intermediate in catalysis. Glutamate 88 (proton donor/acceptor) is an active-site residue.

This sequence belongs to the phosphoglycerate mutase family. BPG-dependent PGAM subfamily.

It carries out the reaction (2R)-2-phosphoglycerate = (2R)-3-phosphoglycerate. It functions in the pathway carbohydrate degradation; glycolysis; pyruvate from D-glyceraldehyde 3-phosphate: step 3/5. In terms of biological role, catalyzes the interconversion of 2-phosphoglycerate and 3-phosphoglycerate. This chain is 2,3-bisphosphoglycerate-dependent phosphoglycerate mutase, found in Nocardioides sp. (strain ATCC BAA-499 / JS614).